Consider the following 501-residue polypeptide: L-arabinose isomerase (501 aa).

Mn(2+) is bound by residues Glu306, Glu333, His350, and His449.

It belongs to the arabinose isomerase family. Mn(2+) serves as cofactor.

It catalyses the reaction beta-L-arabinopyranose = L-ribulose. It participates in carbohydrate degradation; L-arabinose degradation via L-ribulose; D-xylulose 5-phosphate from L-arabinose (bacterial route): step 1/3. In terms of biological role, catalyzes the conversion of L-arabinose to L-ribulose. The sequence is that of L-arabinose isomerase from Herpetosiphon aurantiacus (strain ATCC 23779 / DSM 785 / 114-95).